The primary structure comprises 138 residues: Holo-[acyl-carrier-protein] synthase (138 aa).

Positions 8 and 57 each coordinate Mg(2+).

The protein belongs to the P-Pant transferase superfamily. AcpS family. It depends on Mg(2+) as a cofactor.

It is found in the cytoplasm. The enzyme catalyses apo-[ACP] + CoA = holo-[ACP] + adenosine 3',5'-bisphosphate + H(+). Functionally, transfers the 4'-phosphopantetheine moiety from coenzyme A to a Ser of acyl-carrier-protein. This chain is Holo-[acyl-carrier-protein] synthase, found in Phenylobacterium zucineum (strain HLK1).